A 173-amino-acid chain; its full sequence is Lipoprotein signal peptidase (173 aa).

The next 4 helical transmembrane spans lie at 24-44 (PWLG…IAIL), 55-75 (ITGF…SFLA), 80-100 (WQRW…VWLL), and 105-125 (GQKL…GNVI). Active-site residues include Asp135 and Asp153. The helical transmembrane segment at 145 to 165 (HWPAFNVADCGICIGAVLLII) threads the bilayer.

The protein belongs to the peptidase A8 family.

Its subcellular location is the cell inner membrane. The catalysed reaction is Release of signal peptides from bacterial membrane prolipoproteins. Hydrolyzes -Xaa-Yaa-Zaa-|-(S,diacylglyceryl)Cys-, in which Xaa is hydrophobic (preferably Leu), and Yaa (Ala or Ser) and Zaa (Gly or Ala) have small, neutral side chains.. It functions in the pathway protein modification; lipoprotein biosynthesis (signal peptide cleavage). This protein specifically catalyzes the removal of signal peptides from prolipoproteins. This is Lipoprotein signal peptidase from Ralstonia nicotianae (strain ATCC BAA-1114 / GMI1000) (Ralstonia solanacearum).